We begin with the raw amino-acid sequence, 460 residues long: Cysteine--tRNA ligase (460 aa).

Cys-27 contributes to the Zn(2+) binding site. Residues 29-39 (PTVYDLIHVGN) carry the 'HIGH' region motif. Zn(2+) contacts are provided by Cys-207, His-232, and Glu-236. Positions 264–268 (KMSKS) match the 'KMSKS' region motif. ATP is bound at residue Lys-267.

It belongs to the class-I aminoacyl-tRNA synthetase family. Monomer. Zn(2+) is required as a cofactor.

It is found in the cytoplasm. The catalysed reaction is tRNA(Cys) + L-cysteine + ATP = L-cysteinyl-tRNA(Cys) + AMP + diphosphate. This Thermotoga maritima (strain ATCC 43589 / DSM 3109 / JCM 10099 / NBRC 100826 / MSB8) protein is Cysteine--tRNA ligase (cysS).